The chain runs to 239 residues: 3,4-dihydroxyphthalate decarboxylase (239 aa).

Glu-84 serves as the catalytic Proton donor/acceptor. A divalent metal cation is bound by residues Glu-84, His-103, His-105, and His-171.

This sequence belongs to the aldolase class II family. The cofactor is a divalent metal cation.

It carries out the reaction 3,4-dihydroxyphthalate + H(+) = 3,4-dihydroxybenzoate + CO2. It participates in xenobiotic degradation; phthalate degradation. Functionally, catalyzes the decarboxylation of 3,4-dihydroxyphthalate to protocatechuate (3,4-dihydroxybenzoate) during phthalate metabolism. The protein is 3,4-dihydroxyphthalate decarboxylase of Terrabacter sp. (strain DBF63).